Consider the following 166-residue polypeptide: Phosphopantetheine adenylyltransferase (166 aa).

Position 11 (Ser-11) interacts with substrate. ATP is bound by residues 11 to 12 and His-19; that span reads SF. Lys-43, Ala-76, and Arg-90 together coordinate substrate. Residues 91-93, Glu-101, and 126-132 contribute to the ATP site; these read GLR and LQPISSS.

It belongs to the bacterial CoaD family. As to quaternary structure, homohexamer. Mg(2+) is required as a cofactor.

It localises to the cytoplasm. It catalyses the reaction (R)-4'-phosphopantetheine + ATP + H(+) = 3'-dephospho-CoA + diphosphate. The protein operates within cofactor biosynthesis; coenzyme A biosynthesis; CoA from (R)-pantothenate: step 4/5. Its function is as follows. Reversibly transfers an adenylyl group from ATP to 4'-phosphopantetheine, yielding dephospho-CoA (dPCoA) and pyrophosphate. This is Phosphopantetheine adenylyltransferase from Streptococcus equi subsp. zooepidemicus (strain MGCS10565).